We begin with the raw amino-acid sequence, 102 residues long: UPF0213 protein Spro_0507 (102 aa).

The 76-residue stretch at 6-81 (PTWHLYMLRM…KQLSKTQKER (76 aa)) folds into the GIY-YIG domain.

Belongs to the UPF0213 family.

The protein is UPF0213 protein Spro_0507 of Serratia proteamaculans (strain 568).